We begin with the raw amino-acid sequence, 94 residues long: Large ribosomal subunit protein uL23 (94 aa).

Belongs to the universal ribosomal protein uL23 family. Part of the 50S ribosomal subunit. Contacts protein L29, and trigger factor when it is bound to the ribosome.

Functionally, one of the early assembly proteins it binds 23S rRNA. One of the proteins that surrounds the polypeptide exit tunnel on the outside of the ribosome. Forms the main docking site for trigger factor binding to the ribosome. In Mycoplasma mycoides subsp. mycoides SC (strain CCUG 32753 / NCTC 10114 / PG1), this protein is Large ribosomal subunit protein uL23.